Reading from the N-terminus, the 422-residue chain is Adenylosuccinate synthetase (422 aa).

GTP contacts are provided by residues 11-17 and 39-41; these read GDEGKGK and GHT. D12 acts as the Proton acceptor in catalysis. Mg(2+)-binding residues include D12 and G39. IMP contacts are provided by residues 12 to 15, 37 to 40, T129, R143, N219, T234, and R298; these read DEGK and NAGH. H40 acts as the Proton donor in catalysis. 294–300 contacts substrate; that stretch reads VTTGRRR. GTP-binding positions include R300, 326-328, and 409-411; these read KLD and GTG.

This sequence belongs to the adenylosuccinate synthetase family. In terms of assembly, homodimer. The cofactor is Mg(2+).

It is found in the cytoplasm. The enzyme catalyses IMP + L-aspartate + GTP = N(6)-(1,2-dicarboxyethyl)-AMP + GDP + phosphate + 2 H(+). Its pathway is purine metabolism; AMP biosynthesis via de novo pathway; AMP from IMP: step 1/2. Functionally, plays an important role in the de novo pathway and in the salvage pathway of purine nucleotide biosynthesis. Catalyzes the first committed step in the biosynthesis of AMP from IMP. This is Adenylosuccinate synthetase from Ajellomyces capsulatus (strain NAm1 / WU24) (Darling's disease fungus).